Reading from the N-terminus, the 703-residue chain is MEKFVLFAPLIASLIAGLGWRAIGEKAAQYLTTGVLFLSCLISWYLFLSFDGVPRHIPVLDWVVTGDFHAEWAIRLDRLTAIMLIVVTTVSALVHMYSLGYMAHDDNWTHDEHYKARFFAYLSFFTFAMLMLVTADNLLQMFFGWEGVGVASYLLIGFYYKKASANAAAMKAFIVNRVGDFGFLLGIFGIYWLTGSVQFDEIFRQVPQLAQTEIDFLWRDWNAANLLGFLLFVGAMGKSAQLLLHTWLPDAMEGPTPVSALIHAATMVTAGVFLVCRMSPLYEFAPDAKNFIVIIGATTAFFAATVGLVQNDIKRVIAYSTCSQLGYMFVAAGVGVYSAAMFHLLTHAFFKAMLFLGAGSVIHAMHHEQDMRNYGGLRKKIPLTFWAMMIGTFAITGVGIPLTHLGFAGFLSKDAIIESAYAGSGYAFWLLVIAACFTSFYSWRLIFLTFYGKPRGDHHAHDHAHESPPVMTIPLGVLAIGAVFAGMVWYGPFFGDHHKVTEYFHIAGAHHEAAEGEEAEHATAEAPVEHAVADTATAEGEAAAEAEHAEIAAPVGGAIYMHPDNHIMDEAHHAPAWVKVSPFVAMVLGLITAWTFYIANPSLPRRLAAHEPALYRFLLNKWYFDEIYEFIFVRPAKWLGRVLWKGGDGAVIDGTINGVAMGLIPRLTRAAVRVQSGYLFHYAFAMVLGIVGLLIWVMMRGAH.

A run of 16 helical transmembrane segments spans residues 4–24 (FVLF…RAIG), 30–50 (YLTT…FLSF), 79–99 (LTAI…MYSL), 116–136 (ARFF…VTAD), 138–158 (LLQM…LIGF), 179–199 (GDFG…SVQF), 224–244 (ANLL…QLLL), 256–276 (TPVS…FLVC), 290–310 (NFIV…GLVQ), 325–345 (LGYM…FHLL), 346–366 (THAF…HAMH), 381–401 (IPLT…VGIP), 415–435 (AIIE…VIAA), 475–495 (LGVL…PFFG), 580–600 (VSPF…YIAN), and 679–699 (LFHY…WVMM).

The protein belongs to the complex I subunit 5 family. As to quaternary structure, NDH-1 is composed of at least 14 different subunits, Nqo1 to Nqo14. The complex has a L-shaped structure, with the hydrophobic arm (subunits Nqo7, Nqo8, Nqo10 to Nqo14) embedded in the inner membrane and the hydrophilic peripheral arm (subunits Nqo1 to Nqo6, Nqo9) protruding into the bacterial cytoplasm. The hydrophilic domain contains all the redox centers.

The protein localises to the cell inner membrane. The enzyme catalyses a quinone + NADH + 5 H(+)(in) = a quinol + NAD(+) + 4 H(+)(out). NDH-1 shuttles electrons from NADH, via FMN and iron-sulfur (Fe-S) centers, to quinones in the respiratory chain. The immediate electron acceptor for the enzyme in this species is believed to be ubiquinone. Couples the redox reaction to proton translocation (for every two electrons transferred, four hydrogen ions are translocated across the cytoplasmic membrane), and thus conserves the redox energy in a proton gradient. This Paracoccus denitrificans protein is NADH-quinone oxidoreductase chain 12.